Consider the following 179-residue polypeptide: Bifunctional protein PyrR (179 aa).

The PRPP-binding signature appears at 99–111 (VILVDDVLYTGRT).

This sequence belongs to the purine/pyrimidine phosphoribosyltransferase family. PyrR subfamily. In terms of assembly, homodimer and homohexamer; in equilibrium.

It carries out the reaction UMP + diphosphate = 5-phospho-alpha-D-ribose 1-diphosphate + uracil. Functionally, regulates transcriptional attenuation of the pyrimidine nucleotide (pyr) operon by binding in a uridine-dependent manner to specific sites on pyr mRNA. This disrupts an antiterminator hairpin in the RNA and favors formation of a downstream transcription terminator, leading to a reduced expression of downstream genes. Also displays a weak uracil phosphoribosyltransferase activity which is not physiologically significant. This chain is Bifunctional protein PyrR, found in Limosilactobacillus fermentum (strain NBRC 3956 / LMG 18251) (Lactobacillus fermentum).